A 2703-amino-acid chain; its full sequence is Neurogenic locus Notch protein (2703 aa).

The N-terminal stretch at 1-52 is a signal peptide; that stretch reads MQSQRSRRRSRAPNTWICFWINKMHAVASLPASLPLLLLTLAFANLPNTVRG. At 53-1745 the chain is on the extracellular side; sequence TDTALVAASC…NGEPPANVKY (1693 aa). EGF-like domains are found at residues 58–95, 96–136, 139–176, and 177–215; these read VAAS…DYCE, HRNP…SLCE, VPNA…ERCE, and TKNL…DTCS. Cystine bridges form between Cys62-Cys73, Cys67-Cys83, Cys85-Cys94, Cys100-Cys111, Cys105-Cys124, Cys126-Cys135, Cys143-Cys154, Cys148-Cys164, Cys166-Cys175, Cys181-Cys192, Cys186-Cys203, Cys205-Cys214, Cys221-Cys232, Cys226-Cys241, Cys243-Cys252, Cys259-Cys270, Cys264-Cys279, Cys281-Cys290, Cys297-Cys308, Cys302-Cys317, Cys319-Cys328, Cys335-Cys349, Cys343-Cys358, and Cys360-Cys369. The O-linked (Fuc...) threonine glycan is linked to Thr72. O-linked (Fuc...) threonine glycosylation occurs at Thr110. Thr153 is a glycosylation site (O-linked (Fuc...) threonine). Ser183 carries O-linked (Glc...) serine glycosylation. Thr191 is a glycosylation site (O-linked (Fuc...) threonine). An O-linked (GlcNAc...) threonine glycan is attached at Thr210. The 37-residue stretch at 217–253 folds into the EGF-like 5; calcium-binding domain; sequence DIEECQSNPCKYGGTCVNTHGSYQCMCPTGYTGKDCD. O-linked (Glc...) serine glycosylation occurs at Ser223. The O-linked (Fuc...) threonine glycan is linked to Thr231. One can recognise an EGF-like 6 domain in the interval 255–291; that stretch reads KYKPCSPSPCQNGGICRSNGLSYECKCPKGFEGKNCE. The region spanning 293–329 is the EGF-like 7; calcium-binding domain; it reads NYDDCLGHLCQNGGTCIDGISDYTCRCPPNFTGRFCQ. An O-linked (Fuc...) threonine glycan is attached at Thr307. Residue Asn322 is glycosylated (N-linked (GlcNAc...) asparagine). Residues 331-370 form the EGF-like 8; calcium-binding domain; it reads DVDECAQRDHPVCQNGATCTNTHGSYSCICVNGWAGLDCS. Residue Thr348 is glycosylated (O-linked (Fuc...) threonine). A glycan (N-linked (GlcNAc...) asparagine) is linked at Asn371. The 37-residue stretch at 372–408 folds into the EGF-like 9; calcium-binding domain; the sequence is NTDDCKQAACFYGATCIDGVGSFYCQCTKGKTGLLCH. Intrachain disulfides connect Cys376-Cys387, Cys381-Cys396, Cys398-Cys407, Cys413-Cys424, Cys418-Cys435, Cys437-Cys446, Cys453-Cys465, and Cys459-Cys474. Residue Thr386 is glycosylated (O-linked (Fuc...) threonine). The EGF-like 10 domain maps to 409–447; the sequence is LDDACTSNPCHADAICDTSPINGSYACSCATGYKGVDCS. The O-linked (Glc...) serine glycan is linked to Ser427. N-linked (GlcNAc...) asparagine glycosylation is present at Asn430. The 38-residue stretch at 449-486 folds into the EGF-like 11; calcium-binding domain; sequence DIDECDQGSPCEHNGICVNTPGSYRCNCSQGFTGPRCE. Residue Asn475 is glycosylated (N-linked (GlcNAc...) asparagine). Cystine bridges form between Cys476/Cys485, Cys492/Cys503, Cys497/Cys512, Cys514/Cys523, Cys530/Cys541, Cys535/Cys550, Cys552/Cys561, Cys568/Cys579, Cys573/Cys588, Cys590/Cys599, Cys606/Cys616, Cys611/Cys625, Cys627/Cys636, Cys643/Cys654, Cys648/Cys663, Cys665/Cys674, Cys681/Cys692, Cys686/Cys701, Cys703/Cys712, Cys719/Cys730, Cys724/Cys739, Cys741/Cys750, Cys757/Cys768, Cys762/Cys777, Cys779/Cys788, Cys795/Cys806, Cys800/Cys815, Cys817/Cys826, Cys833/Cys844, Cys838/Cys853, Cys855/Cys864, Cys871/Cys882, Cys876/Cys893, Cys895/Cys904, Cys911/Cys923, Cys917/Cys932, Cys934/Cys943, Cys950/Cys961, Cys955/Cys970, Cys972/Cys981, Cys988/Cys999, Cys993/Cys1008, Cys1010/Cys1019, Cys1026/Cys1037, Cys1031/Cys1046, Cys1048/Cys1057, Cys1064/Cys1075, Cys1069/Cys1084, Cys1086/Cys1095, Cys1102/Cys1113, Cys1107/Cys1122, Cys1124/Cys1133, Cys1155/Cys1160, Cys1171/Cys1180, Cys1187/Cys1198, Cys1192/Cys1207, Cys1209/Cys1218, Cys1225/Cys1236, Cys1230/Cys1245, Cys1247/Cys1256, Cys1263/Cys1274, Cys1268/Cys1283, Cys1285/Cys1294, Cys1301/Cys1314, Cys1306/Cys1323, Cys1325/Cys1334, Cys1341/Cys1352, Cys1346/Cys1361, Cys1363/Cys1372, Cys1379/Cys1389, Cys1384/Cys1400, Cys1402/Cys1411, Cys1419/Cys1430, Cys1424/Cys1439, Cys1441/Cys1450, Cys1482/Cys1505, Cys1487/Cys1500, and Cys1496/Cys1512. A glycan (O-linked (GlcNAc...) threonine) is linked at Thr481. The region spanning 488–524 is the EGF-like 12; calcium-binding domain; the sequence is NINECESHPCQNEGSCLDDPGTFRCVCMPGFTGTQCE. O-linked (Glc...) serine glycosylation occurs at Ser494. Ser502 is a glycosylation site (O-linked (Fuc...) serine). A glycan (O-linked (GlcNAc...) threonine) is linked at Thr519. The region spanning 526–562 is the EGF-like 13; calcium-binding domain; it reads DIDECQSNPCLNDGTCHDKINGFKCSCALGFTGARCQ. Ser532 carries O-linked (Glc...) serine glycosylation. Residues 564 to 600 enclose the EGF-like 14; calcium-binding domain; the sequence is NIDDCQSQPCRNRGICHDSIAGYSCECPPGYTGTSCE. Ser570 carries an O-linked (Glc...) serine glycan. O-linked (GlcNAc...) threonine glycosylation is present at Thr595. One can recognise an EGF-like 15; calcium-binding domain in the interval 602 to 637; sequence NINDCDSNPCHRGKCIDDVNSFKCLCDPGYTGYICQ. Ser608 carries O-linked (Glc...) serine glycosylation. Residues 639 to 675 enclose the EGF-like 16; calcium-binding domain; it reads QINECESNPCQFDGHCQDRVGSYYCQCQAGTSGKNCE. Residue Ser645 is glycosylated (O-linked (Glc...) serine). The EGF-like 17; calcium-binding domain maps to 677–713; it reads NVNECHSNPCNNGATCIDGINSYKCQCVPGFTGQHCE. O-linked (Glc...) serine glycosylation occurs at Ser683. The O-linked (Fuc...) threonine glycan is linked to Thr691. One can recognise an EGF-like 18; calcium-binding domain in the interval 715 to 751; it reads NVDECISSPCANNGVCIDQVNGYKCECPRGFYDAHCL. Ser721 carries O-linked (Glc...) serine glycosylation. The region spanning 753 to 789 is the EGF-like 19; calcium-binding domain; the sequence is DVDECASNPCVNEGRCEDGINEFICHCPPGYTGKRCE. A glycan (O-linked (Glc...) serine) is linked at Ser759. The region spanning 791–827 is the EGF-like 20; calcium-binding domain; sequence DIDECSSNPCQHGGTCYDKLNAFSCQCMPGYTGQKCE. An O-linked (Glc...) serine glycan is attached at Ser797. An O-linked (Fuc...) threonine glycan is attached at Thr805. An O-linked (GlcNAc...) threonine glycan is attached at Thr822. The 37-residue stretch at 829–865 folds into the EGF-like 21; calcium-binding domain; it reads NIDDCVTNPCGNGGTCIDKVNGYKCVCKVPFTGRDCE. The O-linked (Fuc...) threonine glycan is linked to Thr843. The region spanning 867–905 is the EGF-like 22 domain; that stretch reads KMDPCASNRCKNEAKCTPSSNFLDFSCTCKLGYTGRYCD. In terms of domain architecture, EGF-like 23; calcium-binding spans 907 to 944; the sequence is DIDECSLSSPCRNGASCLNVPGSYRCLCTKGYEGRDCA. O-linked (Fuc...) serine glycosylation occurs at Ser922. The EGF-like 24; calcium-binding domain maps to 946-982; sequence NTDDCASFPCQNGGTCLDGIGDYSCLCVDGFDGKHCE. O-linked (Glc...) serine glycosylation occurs at Ser952. O-linked (Fuc...) threonine glycosylation is present at Thr960. Residues 984–1020 form the EGF-like 25 domain; the sequence is DINECLSQPCQNGATCSQYVNSYTCTCPLGFSGINCQ. Ser990 carries O-linked (Glc...) serine glycosylation. An O-linked (Fuc...) threonine glycan is attached at Thr998. Positions 1022 to 1058 constitute an EGF-like 26; calcium-binding domain; it reads NDEDCTESSCLNGGSCIDGINGYNCSCLAGYSGANCQ. The O-linked (Fuc...) serine glycan is linked to Ser1036. The N-linked (GlcNAc...) asparagine glycan is linked to Asn1045. 3 consecutive EGF-like domains span residues 1060 to 1096, 1098 to 1134, and 1136 to 1181; these read KLNK…KQCS, YVDW…KLCD, and QTIS…SYCQ. An O-linked (Glc...) serine glycan is attached at Ser1066. An O-linked (Fuc...) threonine glycan is attached at Thr1074. Thr1112 carries an O-linked (Fuc...) threonine glycan. A glycan (N-linked (GlcNAc...) asparagine) is linked at Asn1157. Positions 1183–1219 constitute an EGF-like 30; calcium-binding domain; it reads EIDECQSQPCQNGGTCRDLIGAYECQCRQGFQGQNCE. O-linked (Glc...) serine glycosylation occurs at Ser1189. The O-linked (Fuc...) threonine glycan is linked to Thr1197. In terms of domain architecture, EGF-like 31; calcium-binding spans 1221-1257; sequence NIDDCAPNPCQNGGTCHDRVMNFSCSCPPGTMGIICE. O-linked (Fuc...) threonine glycosylation is present at Thr1235. N-linked (GlcNAc...) asparagine glycosylation occurs at Asn1242. The EGF-like 32; calcium-binding domain occupies 1259–1295; that stretch reads NKDDCKPGACHNNGSCIDRVGGFECVCQPGFVGARCE. N-linked (GlcNAc...) asparagine glycosylation occurs at Asn1271. A glycan (O-linked (Fuc...) serine) is linked at Ser1273. EGF-like domains are found at residues 1297–1335, 1337–1373, 1375–1412, and 1415–1451; these read DINE…RHCE, KVDF…KNCE, SGQD…EHCE, and TLDE…KRCD. Residue Ser1303 is glycosylated (O-linked (Glc...) serine). Ser1381 carries an O-linked (Glc...) serine glycan. LNR repeat units lie at residues 1482-1521, 1522-1557, and 1559-1599; these read CDKR…PWAN, CTAN…RKLK, and CDSL…TQSP. Asn1521 carries an N-linked (GlcNAc...) asparagine glycan. Intrachain disulfides connect Cys1522/Cys1545, Cys1527/Cys1540, Cys1536/Cys1552, Cys1559/Cys1585, Cys1567/Cys1580, and Cys1576/Cys1592. Asn1594 and Asn1627 each carry an N-linked (GlcNAc...) asparagine glycan. Residues 1746–1766 traverse the membrane as a helical segment; it reads VITGIILVIIALAFFGMVLST. Residues 1767–2703 are Cytoplasmic-facing; the sequence is QRKRAHGVTW…ANKGSEAIYI (937 aa). Residues 1810–1850 form a disordered region; it reads QSQGVGQPGAHWSDDESDMPLPKRQRSDPVSGVGLGNNGGY. ANK repeat units follow at residues 1901-1945, 1950-1979, 1983-2013, 2017-2046, 2050-2079, 2083-2112, and 2116-2139; these read CGLT…ELNA, TGET…DANC, TGRT…NLNA, DGTT…DINA, SGKT…NRDA, KDET…NREI, and MDRL…LDEH. The interval 2172 to 2257 is disordered; that stretch reads TVISAGNGGN…LTGGVSGVPG (86 aa). A compositionally biased stretch (low complexity) spans 2228–2238; that stretch reads KKTSAASKKAA. The interval 2325–2328 is interaction with Nedd4; sequence PPSY. Disordered stretches follow at residues 2399–2452, 2488–2524, 2579–2620, and 2632–2703; these read SGAG…PTSP, GGGG…APPQ, LDLN…PSSQ, and PSSQ…AIYI. Residues 2414-2429 show a composition bias toward polar residues; that stretch reads PYSNQSPPHSVQSSLA. Phosphoserine is present on Ser2447. Over residues 2488 to 2497 the composition is skewed to gly residues; it reads GGGGGGGVGQ. Low complexity predominate over residues 2598-2619; sequence PPSIQSSMSGSSPSTNMLSPSS. A compositionally biased stretch (polar residues) spans 2632–2653; it reads PSSQHSGGHTPQHLVQTLDSYP. Low complexity predominate over residues 2659 to 2675; it reads SPGHWSSSSPRSNSDWS. Residues 2677 to 2687 show a composition bias toward polar residues; that stretch reads GVQSPAANNLY.

Belongs to the NOTCH family. In terms of assembly, homomer. Interacts with Su(H) when activated. Interacts with Dx via its ANK repeats. Interacts with Delta via the EGF repeats and the Delta EGF repeats. Interacts with Nedd4 and Su(dx). Interacts with O-fut1; the interaction glycosylates N and transports N to early endosomes. Interacts with Akap200; the interaction stabilizes N/Notch protein levels by preventing Cbl-mediated ubiquitination and subsequent lysosomal degradation of N/Notch. Post-translationally, upon binding its ligands such as Delta or Serrate, it is cleaved (S2 cleavage) in its extracellular domain, close to the transmembrane domain. S2 cleavage is probably mediated by Kuz. It is then cleaved (S3 cleavage) downstream of its transmembrane domain, releasing it from the cell membrane. S3 cleavage requires Psn. O-glycosylated. Three forms of O-glycosylation (O-fucosylation, O-glucosylation and O-GlcNAcylation) are detected. O-fucosylated by O-fut1 and fng in the EGF repeat domain inhibits both Serrate/Ser- and Delta/Dl-binding. O-glucosylation by rumi in the endoplasmic reticulum is necessary for correct folding and signaling. In terms of processing, ubiquitinated by various ubiquitin ligases; which promotes ligand-independent endocytosis and proteasomal degradation. Ubiquitinated by Nedd4. May also be ubiquitinated by Su(dx) and Cbl. Mono-ubiquitinated, possibly by dx/deltex; this may be involved in the ESCRT-III mediated targeting to multivesicular bodies.

It is found in the cell membrane. The protein resides in the endosome. It localises to the multivesicular body. The protein localises to the nucleus. Its function is as follows. Essential signaling protein which has a major role in many developmental processes. Functions as a receptor for membrane-bound ligands Delta and Serrate to regulate cell-fate determination. Upon ligand activation, and releasing from the cell membrane, the Notch intracellular domain (NICD) forms a transcriptional activator complex with Su(H) (Suppressor of hairless) and activates genes of the E(spl) complex. Regulates oogenesis, the differentiation of the ectoderm and the development of the central and peripheral nervous system, eye, wing disk, muscles and segmental appendages such as antennae and legs, through lateral inhibition or induction. Regulates neuroblast self-renewal, identity and proliferation through the regulation of bHLH-O proteins; in larval brains, involved in the maintenance of type II neuroblast self-renewal and identity by suppressing erm expression together with pnt; might also regulate dpn expression through the activation of the transcriptional regulator Su(H). Targeted for ESCRT-mediated endosomal sequestration and lysosomal degradation by various E3 ubiquitin ligases to regulate the Notch signaling pathway. Can undergo ligand-dependent and non-canonical ligand-independent activation. Ligand-independent activation is dependent on endosome acidification and probably occurs in late endosomes or lysosome. Ectopic ligand-independent activation occurs when disruption of the endolysosomal pathway, particularly of the ESCRT-III complex, prevents sequestration of the receptor in intraluminal vesicles of multivesicular bodies. The polypeptide is Neurogenic locus Notch protein (Drosophila melanogaster (Fruit fly)).